A 175-amino-acid polypeptide reads, in one-letter code: Thioredoxin M3, chloroplastic (175 aa).

A chloroplast-targeting transit peptide spans 1–59; sequence MAATATACPAPPPPRSLYRGVALAAPGRRRAGYGASSSAARRWPGCRRRWAAHRIRTVS. In terms of domain architecture, Thioredoxin spans 61–171; sequence AYSPRGAKTI…YVRAIEKSIS (111 aa). Catalysis depends on nucleophile residues C95 and C98. A disulfide bond links C95 and C98.

It belongs to the thioredoxin family. Plant M-type subfamily.

It localises to the plastid. The protein resides in the chloroplast. Its function is as follows. Probable thiol-disulfide oxidoreductase that may be involved in the redox regulation of chloroplastic enzymes. This chain is Thioredoxin M3, chloroplastic, found in Oryza sativa subsp. japonica (Rice).